The following is a 532-amino-acid chain: Cytokinin dehydrogenase 1 (532 aa).

Residues 1-17 (MAAIYLLIAALIASSHA) form the signal peptide. N-linked (GlcNAc...) asparagine glycosylation is found at asparagine 52 and asparagine 63. One can recognise an FAD-binding PCMH-type domain in the interval 65 to 244 (TAALPAAVLF…TRARVAVEPA (180 aa)). FAD is bound by residues phenylalanine 100, glycine 102, arginine 103, and glycine 104. Position 105 is a pros-8alpha-FAD histidine (histidine 105). FAD is bound by residues serine 106 and glutamine 110. N-linked (GlcNAc...) asparagine glycosylation is present at asparagine 133. Positions 168, 173, 179, 183, and 234 each coordinate FAD. 2 N-linked (GlcNAc...) asparagine glycosylation sites follow: asparagine 321 and asparagine 432. FAD contacts are provided by tyrosine 490, serine 525, and glutamine 528.

Belongs to the oxygen-dependent FAD-linked oxidoreductase family. As to quaternary structure, monomer. Requires FAD as cofactor.

The protein resides in the secreted. The protein localises to the extracellular space. It catalyses the reaction N(6)-dimethylallyladenine + A + H2O = 3-methyl-2-butenal + adenine + AH2. Functionally, catalyzes the oxidation of cytokinins, a family of N(6)-substituted adenine derivatives that are plant hormones, where the substituent is an isopentenyl group. The protein is Cytokinin dehydrogenase 1 (CKX1) of Oryza sativa subsp. japonica (Rice).